Consider the following 101-residue polypeptide: Apolipoprotein C-II (101 aa).

The first 22 residues, 1–22 (MGTRCLLVLLLVLLVLRCDVQG), serve as a signal peptide directing secretion. A propeptide spans 23-28 (DDMARQ) (removed in mature form). Residues 66–74 (AVDEKIRDM) are lipid binding. The segment at 78 to 101 (STAAVRIYTGILTDQILSMLSGDS) is lipoprotein lipase cofactor.

It belongs to the apolipoprotein C2 family. In terms of processing, proapolipoprotein C-II is synthesized as a sialic acid containing glycoprotein which is subsequently desialylated prior to its proteolytic processing. Proapolipoprotein C-II, the major form found in plasma undergoes proteolytic cleavage of its N-terminal hexapeptide to generate the mature form apolipoprotein C-II, which occurs as the minor form in plasma.

Its subcellular location is the secreted. In terms of biological role, component of chylomicrons, very low-density lipoproteins (VLDL), low-density lipoproteins (LDL), and high-density lipoproteins (HDL) in plasma. Plays an important role in lipoprotein metabolism as an activator of lipoprotein lipase, the enzyme which hydrolyzes the triacylglycerols on chylomicrons and VLDL. The sequence is that of Apolipoprotein C-II (APOC2) from Acinonyx jubatus (Cheetah).